The sequence spans 179 residues: Large ribosomal subunit protein uL5 (179 aa).

This sequence belongs to the universal ribosomal protein uL5 family. As to quaternary structure, part of the 50S ribosomal subunit; part of the 5S rRNA/L5/L18/L25 subcomplex. Contacts the 5S rRNA and the P site tRNA. Forms a bridge to the 30S subunit in the 70S ribosome.

Its function is as follows. This is one of the proteins that bind and probably mediate the attachment of the 5S RNA into the large ribosomal subunit, where it forms part of the central protuberance. In the 70S ribosome it contacts protein S13 of the 30S subunit (bridge B1b), connecting the 2 subunits; this bridge is implicated in subunit movement. Contacts the P site tRNA; the 5S rRNA and some of its associated proteins might help stabilize positioning of ribosome-bound tRNAs. This Bacillus mycoides (strain KBAB4) (Bacillus weihenstephanensis) protein is Large ribosomal subunit protein uL5.